The chain runs to 191 residues: UPF0312 protein SO_3370 (191 aa).

The N-terminal stretch at 1–22 (MKKQLFSALIGASLFAPMAVSA) is a signal peptide.

Belongs to the UPF0312 family. Type 1 subfamily.

It localises to the periplasm. The protein is UPF0312 protein SO_3370 of Shewanella oneidensis (strain ATCC 700550 / JCM 31522 / CIP 106686 / LMG 19005 / NCIMB 14063 / MR-1).